The primary structure comprises 259 residues: Type III pantothenate kinase (259 aa).

6–13 (DVGNTNCT) contacts ATP. Position 107 to 110 (107 to 110 (GSDR)) interacts with substrate. The active-site Proton acceptor is the D109. D129 serves as a coordination point for K(+). T132 is an ATP binding site. T184 is a binding site for substrate.

The protein belongs to the type III pantothenate kinase family. Homodimer. The cofactor is NH4(+). K(+) serves as cofactor.

It localises to the cytoplasm. It carries out the reaction (R)-pantothenate + ATP = (R)-4'-phosphopantothenate + ADP + H(+). It functions in the pathway cofactor biosynthesis; coenzyme A biosynthesis; CoA from (R)-pantothenate: step 1/5. In terms of biological role, catalyzes the phosphorylation of pantothenate (Pan), the first step in CoA biosynthesis. The polypeptide is Type III pantothenate kinase (Listeria welshimeri serovar 6b (strain ATCC 35897 / DSM 20650 / CCUG 15529 / CIP 8149 / NCTC 11857 / SLCC 5334 / V8)).